The following is a 20-amino-acid chain: Toxin b subunit beta (20 aa).

In terms of assembly, toxin b is a heterodimer composed of toxin alpha and toxin beta. As to expression, expressed by the venom gland.

The protein localises to the secreted. Its function is as follows. Binds to sodium channels (Nav) and affects the channel activation process. The chain is Toxin b subunit beta from Androctonus crassicauda (Arabian fat-tailed scorpion).